A 474-amino-acid chain; its full sequence is Trehalose-6-phosphate synthase (474 aa).

Position 10 (R10) interacts with D-glucose 6-phosphate. 22–23 lines the UDP-alpha-D-glucose pocket; sequence GG. Positions 77 and 131 each coordinate D-glucose 6-phosphate. Residues R263 and K268 each contribute to the UDP-alpha-D-glucose site. R301 serves as a coordination point for D-glucose 6-phosphate. Residues F340 and 366 to 370 each bind UDP-alpha-D-glucose; that span reads LVAKE.

This sequence belongs to the glycosyltransferase 20 family. In terms of assembly, homotetramer.

It catalyses the reaction D-glucose 6-phosphate + UDP-alpha-D-glucose = alpha,alpha-trehalose 6-phosphate + UDP + H(+). Its pathway is glycan biosynthesis; trehalose biosynthesis. Functionally, probably involved in the osmoprotection via the biosynthesis of trehalose. Catalyzes the transfer of glucose from UDP-alpha-D-glucose (UDP-Glc) to D-glucose 6-phosphate (Glc-6-P) to form trehalose-6-phosphate. Acts with retention of the anomeric configuration of the UDP-sugar donor. This chain is Trehalose-6-phosphate synthase, found in Escherichia coli O157:H7.